Reading from the N-terminus, the 261-residue chain is Uridine-cytidine kinase 2 (261 aa).

The interval 1–24 (MAGDSEQALPKHSPQNGQPFLIGV) is disordered. Residue 26–34 (GGTASGKSS) coordinates ATP. Substrate-binding residues include Asp-83, Tyr-111, His-116, Arg-165, Arg-175, and Gln-183. Asp-212 contributes to the ATP binding site. The span at 238–247 (NGYTNGFTSP) shows a compositional bias: polar residues. Positions 238-261 (NGYTNGFTSPRTRHPSDSNSSRPH) are disordered.

The protein belongs to the uridine kinase family. In terms of assembly, homotetramer.

The catalysed reaction is uridine + ATP = UMP + ADP + H(+). It catalyses the reaction cytidine + ATP = CMP + ADP + H(+). Its pathway is pyrimidine metabolism; CTP biosynthesis via salvage pathway; CTP from cytidine: step 1/3. It participates in pyrimidine metabolism; UMP biosynthesis via salvage pathway; UMP from uridine: step 1/1. Its function is as follows. Phosphorylates uridine and cytidine to uridine monophosphate and cytidine monophosphate. Does not phosphorylate deoxyribonucleosides or purine ribonucleosides. Can use ATP or GTP as a phosphate donor. In Xenopus tropicalis (Western clawed frog), this protein is Uridine-cytidine kinase 2 (uck2).